Consider the following 291-residue polypeptide: MEMO1 family protein PH1626 (291 aa).

It belongs to the MEMO1 family.

This chain is MEMO1 family protein PH1626, found in Pyrococcus horikoshii (strain ATCC 700860 / DSM 12428 / JCM 9974 / NBRC 100139 / OT-3).